A 201-amino-acid polypeptide reads, in one-letter code: ATP-dependent Clp protease proteolytic subunit (201 aa).

The Nucleophile role is filled by Ser101. Residue His126 is part of the active site.

Belongs to the peptidase S14 family. In terms of assembly, component of the chloroplastic Clp protease core complex.

The protein localises to the plastid. It is found in the chloroplast stroma. The enzyme catalyses Hydrolysis of proteins to small peptides in the presence of ATP and magnesium. alpha-casein is the usual test substrate. In the absence of ATP, only oligopeptides shorter than five residues are hydrolyzed (such as succinyl-Leu-Tyr-|-NHMec, and Leu-Tyr-Leu-|-Tyr-Trp, in which cleavage of the -Tyr-|-Leu- and -Tyr-|-Trp bonds also occurs).. In terms of biological role, cleaves peptides in various proteins in a process that requires ATP hydrolysis. Has a chymotrypsin-like activity. Plays a major role in the degradation of misfolded proteins. This Chlorella vulgaris (Green alga) protein is ATP-dependent Clp protease proteolytic subunit.